The chain runs to 183 residues: MPARLEVYYRETVVPKLMERFKYKSIMMVPRLEKISVNIGVGEAAQEPKLLETAMQELGQITGQKPQVRKAKKAISNFKLREGQAIGCRVTLRRKIMFEFMDRFISVAVPRIRDFRGLSDTSFDGRGNYNVGIREQIIFPEIDIDKVPRINGMDISFVTSAKTDEEAYELLSLLGMPFKKKNQ.

It belongs to the universal ribosomal protein uL5 family. Part of the 50S ribosomal subunit; part of the 5S rRNA/L5/L18/L25 subcomplex. Contacts the 5S rRNA and the P site tRNA. Forms a bridge to the 30S subunit in the 70S ribosome.

In terms of biological role, this is one of the proteins that bind and probably mediate the attachment of the 5S RNA into the large ribosomal subunit, where it forms part of the central protuberance. In the 70S ribosome it contacts protein S13 of the 30S subunit (bridge B1b), connecting the 2 subunits; this bridge is implicated in subunit movement. Contacts the P site tRNA; the 5S rRNA and some of its associated proteins might help stabilize positioning of ribosome-bound tRNAs. The chain is Large ribosomal subunit protein uL5 from Chlorobaculum tepidum (strain ATCC 49652 / DSM 12025 / NBRC 103806 / TLS) (Chlorobium tepidum).